The following is a 355-amino-acid chain: F-box only protein 32 (355 aa).

A Nuclear localization signal motif is present at residues 62 to 67 (KKRKKD). The short motif at 169–173 (LLQTL) is the Nuclear export signal element. The 49-residue stretch at 223–271 (LTITDLPVCLQLNIMQRLSDGRDLVSLGQAAPDLHVLSEDRLLWKRLCQ) folds into the F-box domain. The Bipartite nuclear localization signal signature appears at 280–295 (RKRLILSDKGQLDWKK).

Part of the SCF (SKP1-CUL1-F-box) E3 ubiquitin-protein ligase complex SCF(FBXO32) formed of CUL1, SKP1, RBX1 and FBXO32. As to expression, specifically expressed in cardiac and skeletal muscle.

It localises to the cytoplasm. It is found in the nucleus. Its pathway is protein modification; protein ubiquitination. Substrate recognition component of a SCF (SKP1-CUL1-F-box protein) E3 ubiquitin-protein ligase complex which mediates the ubiquitination and subsequent proteasomal degradation of target proteins. Probably recognizes and binds to phosphorylated target proteins during skeletal muscle atrophy. Recognizes TERF1. This Mus musculus (Mouse) protein is F-box only protein 32 (Fbxo32).